A 99-amino-acid chain; its full sequence is Integration host factor subunit beta (99 aa).

This sequence belongs to the bacterial histone-like protein family. In terms of assembly, heterodimer of an alpha and a beta chain.

Its function is as follows. This protein is one of the two subunits of integration host factor, a specific DNA-binding protein that functions in genetic recombination as well as in transcriptional and translational control. The protein is Integration host factor subunit beta of Rhizobium etli (strain CIAT 652).